Here is a 243-residue protein sequence, read N- to C-terminus: Bidirectional sugar transporter SWEET2a (243 aa).

Residues 1 to 23 are Extracellular-facing; that stretch reads MDWAAPALTSFVADSSYRHLCCY. A helical transmembrane segment spans residues 24–44; that stretch reads GAGIAGNVFAFVLFISPLPTF. A MtN3/slv 1 domain is found at 24–111; that stretch reads GAGIAGNVFA…AVFIAFADAK (88 aa). Over 45 to 57 the chain is Cytoplasmic; it reads KRIVRNGSTEQFS. Residues 58 to 80 traverse the membrane as a helical segment; sequence AMPYIYSLLNCLICMWYGLPFVS. Residues 81–89 are Extracellular-facing; sequence YGVVLVATV. A helical transmembrane segment spans residues 90-110; the sequence is NSIGAVFQLAYTAVFIAFADA. Over 111–117 the chain is Cytoplasmic; the sequence is KQRLKVS. Residues 118-138 form a helical membrane-spanning segment; it reads ALLAAVFVVFGLIVFVSLALL. Topologically, residues 139 to 145 are extracellular; the sequence is DHPTRQM. The helical transmembrane segment at 146-166 threads the bilayer; that stretch reads FVGYLSVASLIFMFASPLSII. Residues 147 to 230 form the MtN3/slv 2 domain; sequence VGYLSVASLI…VLYAYFRKGS (84 aa). The Cytoplasmic portion of the chain corresponds to 167–179; the sequence is NLVIRTKSVEYMP. A helical membrane pass occupies residues 180-200; the sequence is FYLSLSMFLMSASFFGYGVLL. The Extracellular portion of the chain corresponds to 201–202; that stretch reads ND. A helical membrane pass occupies residues 203–223; sequence FFIYIPNGIGTILGIIQLVLY. Residues 224–243 lie on the Cytoplasmic side of the membrane; sequence AYFRKGSSEEAKLPLLVTHT.

Belongs to the SWEET sugar transporter family. In terms of assembly, forms homooligomers and/or heterooligomers.

The protein localises to the cell membrane. Mediates both low-affinity uptake and efflux of sugar across the plasma membrane. This Sorghum bicolor (Sorghum) protein is Bidirectional sugar transporter SWEET2a.